The sequence spans 446 residues: Phosphoglucosamine mutase (446 aa).

The Phosphoserine intermediate role is filled by Ser-100. Residues Ser-100, Asp-241, Asp-243, and Asp-245 each contribute to the Mg(2+) site. A Phosphoserine modification is found at Ser-100.

The protein belongs to the phosphohexose mutase family. The cofactor is Mg(2+). Post-translationally, activated by phosphorylation.

It carries out the reaction alpha-D-glucosamine 1-phosphate = D-glucosamine 6-phosphate. Catalyzes the conversion of glucosamine-6-phosphate to glucosamine-1-phosphate. This chain is Phosphoglucosamine mutase, found in Methylorubrum populi (strain ATCC BAA-705 / NCIMB 13946 / BJ001) (Methylobacterium populi).